The following is a 470-amino-acid chain: 6-phospho-beta-galactosidase (470 aa).

5 residues coordinate D-galactose 6-phosphate: glutamine 19, histidine 116, asparagine 159, glutamate 160, and asparagine 297. The Proton donor role is filled by glutamate 160. Glutamate 375 serves as the catalytic Nucleophile. Serine 430, tryptophan 431, lysine 437, and tyrosine 439 together coordinate D-galactose 6-phosphate.

It belongs to the glycosyl hydrolase 1 family.

It carries out the reaction a 6-phospho-beta-D-galactoside + H2O = D-galactose 6-phosphate + an alcohol. It participates in carbohydrate metabolism; lactose degradation; D-galactose 6-phosphate and beta-D-glucose from lactose 6-phosphate: step 1/1. The chain is 6-phospho-beta-galactosidase from Staphylococcus aureus (strain MRSA252).